We begin with the raw amino-acid sequence, 29 residues long: Dermaseptin-1.2TR (29 aa).

Val-29 bears the Valine amide mark.

As to expression, expressed by the skin glands.

It localises to the secreted. Has antimicrobial activity. This Phyllomedusa trinitatis (Trinidad leaf frog) protein is Dermaseptin-1.2TR.